We begin with the raw amino-acid sequence, 48 residues long: Large ribosomal subunit protein bL32 (48 aa).

Belongs to the bacterial ribosomal protein bL32 family.

The chain is Large ribosomal subunit protein bL32 from Helicobacter pylori (strain P12).